The primary structure comprises 37 residues: Large ribosomal subunit protein bL36 (37 aa).

The protein belongs to the bacterial ribosomal protein bL36 family.

This chain is Large ribosomal subunit protein bL36, found in Vibrio atlanticus (strain LGP32) (Vibrio splendidus (strain Mel32)).